A 347-amino-acid polypeptide reads, in one-letter code: Endothelin receptor type B (347 aa).

Residues E1–K7 lie on the Extracellular side of the membrane. Residues Y8–I32 form a helical membrane-spanning segment. Topologically, residues Y33–N43 are cytoplasmic. A helical membrane pass occupies residues I44–L69. Over A70–K81 the chain is Extracellular. C80 and C161 form a disulfide bridge. The chain crosses the membrane as a helical span at residues L82–I103. Topologically, residues D104–T124 are cytoplasmic. A helical transmembrane segment spans residues A125–I149. Topologically, residues T150–Q177 are extracellular. Residues A178–M202 form a helical membrane-spanning segment. Over T203 to T230 the chain is Cytoplasmic. Residues V231–Y256 traverse the membrane as a helical segment. The Extracellular segment spans residues D257–S268. The chain crosses the membrane as a helical span at residues F269–V295. The Cytoplasmic portion of the chain corresponds to S296–S347. S-palmitoyl cysteine attachment occurs at residues C309 and C311.

The protein belongs to the G-protein coupled receptor 1 family. Endothelin receptor subfamily. EDNRB sub-subfamily.

The protein localises to the cell membrane. In terms of biological role, non-specific receptor for endothelin 1, 2, and 3. Mediates its action by association with G proteins that activate a phosphatidylinositol-calcium second messenger system. The protein is Endothelin receptor type B (EDNRB) of Coturnix japonica (Japanese quail).